An 840-amino-acid chain; its full sequence is Transient receptor potential cation channel subfamily V member 1 (840 aa).

Low complexity predominate over residues 1–12 (MKNWGSSDSGGS). The disordered stretch occupies residues 1 to 43 (MKNWGSSDSGGSEDPPQEDSCLDPLDGDPNSRPVPAKPHIFPT). Residues 1–433 (MKNWGSSDSG…QDKWDRFVKR (433 aa)) are Cytoplasmic-facing. ANK repeat units follow at residues 111–139 (KLYD…FLQK) and 154–186 (TGKT…QTDS). ATP contacts are provided by residues Arg-116, Lys-156, Lys-161, Asn-165, 200 to 203 (YKGQ), and 211 to 212 (ER). ANK repeat units lie at residues 204–229 (TALH…ADVQ), 250–277 (ELPL…QPAD), 286–322 (NTVL…KLHP), and 336–359 (TPLA…REIQ). Thr-371 carries the phosphothreonine; by PKA; in vitro modification. One copy of the ANK 7 repeat lies at 394-416 (NSVLEVIAYSSSETPNRHDMLLV). Residues 434 to 455 (IFYFNFFIYCLYMIIFTTAAYY) form a helical membrane-spanning segment. Topologically, residues 456–473 (RPVDGLPPYKLKHTVGDY) are extracellular. Residues 474 to 498 (FRVTGEILSVLGGVYFFFRGIQYFL) form a helical membrane-spanning segment. Residues 499 to 511 (QRRPSLKTLFVDS) lie on the Cytoplasmic side of the membrane. Phosphoserine; by PKC/PRKCE is present on Ser-503. Position 512–513 (512–513 (YS)) interacts with resiniferatoxin. Residues 512–533 (YSEMLFFVQSLFMLGTVVLYFC) form a helical membrane-spanning segment. Residues 534-536 (HHK) are Extracellular-facing. A helical transmembrane segment spans residues 537 to 557 (EYVASMVFSLAMGWTNMLYYT). The resiniferatoxin site is built by Thr-551 and Arg-558. The Cytoplasmic segment spans residues 558 to 560 (RGF). A helical membrane pass occupies residues 561–599 (QQMGIYAVMIEKMILRDLCRFMFVYLVFLFGFSTAVVTL). The Extracellular segment spans residues 600-631 (IEDGKNNSVPTESTLHRWRGPGCRPPDSSYNS). A glycan (N-linked (GlcNAc...) asparagine) is linked at Asn-605. An intramembrane region (pore-forming) is located at residues 632 to 653 (LYSTCLELFKFTIGMGDLEFTE). Gly-645 lines the Na(+) pocket. A Selectivity filter motif is present at residues 645-648 (GMGD). Residue Asp-648 coordinates Ca(2+). Over 654–657 (NYDF) the chain is Extracellular. Residues 658–684 (KAVFIILLLAYVILTYILLLNMLIALM) traverse the membrane as a helical segment. At 685–840 (GETVNKIAQE…FKDPVGLGEK (156 aa)) the chain is on the cytoplasmic side. The interval 686–714 (ETVNKIAQESKNIWKLQRAITILDTEKSF) is AD. Thr-706 bears the Phosphothreonine mark. The interaction with calmodulin stretch occupies residues 769–803 (EGIKRTLSFSLRSGRVSGRNWKNFSLVPLLRDAST). A Phosphoserine modification is found at Ser-776. The segment at 779–794 (LRSGRVSGRNWKNFSL) is required for PIP2-mediated channel inhibition. The residue at position 802 (Ser-802) is a Phosphoserine; by PKC/PRKCE and PKC/PRKCZ. Residue Ser-822 is modified to Phosphoserine.

The protein belongs to the transient receptor (TC 1.A.4) family. TrpV subfamily. TRPV1 sub-subfamily. In terms of assembly, homotetramer. Interacts with PIRT. May also form a heteromeric channel with TRPV3. Interacts with CALM, PRKCM and CSK. Interacts with PRKCG and NTRK1, probably by forming a trimeric complex. Interacts with the Scolopendra mutilans RhTx toxin. Interacts with TMEM100. Interacts with PACS2. Phosphorylation by PKA reverses capsaicin-induced dephosphorylation at multiple sites. Phosphorylation by CAMKII seems to regulate binding to vanilloids. Phosphorylated and modulated by PRKCE, PRKCM and probably PRKCZ. Dephosphorylation by calcineurin seems to lead to receptor desensitization and phosphorylation by CAMKII recovers activity.

It is found in the postsynaptic cell membrane. It localises to the cell projection. The protein resides in the dendritic spine membrane. The protein localises to the cell membrane. It catalyses the reaction Ca(2+)(in) = Ca(2+)(out). The enzyme catalyses Mg(2+)(in) = Mg(2+)(out). It carries out the reaction Na(+)(in) = Na(+)(out). The catalysed reaction is K(+)(in) = K(+)(out). Its activity is regulated as follows. Channel activity is activated via the interaction with PIRT and phosphatidylinositol 4,5-bisphosphate (PIP2). Both PIRT and PIP2 are required to activate channel activity. The channel is sensitized by ATP binding. Repeated stimulation with capsaicin gives rise to progressively smaller responses, due to desensitization. This desensitization is triggered by the influx of calcium ions and is inhibited by elevated ATP levels. Ca(2+) and CALM displace ATP from its binding site and trigger a conformation change that leads to a closed, desensitized channel. Intracellular PIP2 inhibits desensitization. The double-knot toxin (DkTx) from the Chinese earth tiger tarantula activates the channel and traps it in an open conformation. The Scolopendra mutilans RhTx toxin potentiates the heat activation pathway mediated by this channel by binding to the charge-rich outer pore region (in an activated state). Non-selective calcium permeant cation channel involved in detection of noxious chemical and thermal stimuli. Seems to mediate proton influx and may be involved in intracellular acidosis in nociceptive neurons. Involved in mediation of inflammatory pain and hyperalgesia. Sensitized by a phosphatidylinositol second messenger system activated by receptor tyrosine kinases, which involves PKC isozymes and PCL. Activated by vanilloids, like capsaicin, and temperatures higher than 42 degrees Celsius. Upon activation, exhibits a time- and Ca(2+)-dependent outward rectification, followed by a long-lasting refractory state. Mild extracellular acidic pH (6.5) potentiates channel activation by noxious heat and vanilloids, whereas acidic conditions (pH &lt;6) directly activate the channel. Can be activated by endogenous compounds, including 12-hydroperoxytetraenoic acid and bradykinin. Acts as ionotropic endocannabinoid receptor with central neuromodulatory effects. Triggers a form of long-term depression (TRPV1-LTD) mediated by the endocannabinoid anandamine in the hippocampus and nucleus accumbens by affecting AMPA receptors endocytosis. The protein is Transient receptor potential cation channel subfamily V member 1 (TRPV1) of Canis lupus familiaris (Dog).